The following is a 1931-amino-acid chain: Chitin synthase 5 (1931 aa).

Positions 11–777 (LGVTDLSSLA…LFRFLEDRLR (767 aa)) constitute a Myosin motor domain. 122 to 129 (GPTGSGKS) serves as a coordination point for ATP. 3 N-linked (GlcNAc...) asparagine glycosylation sites follow: N510, N538, and N676. The actin-binding stretch occupies residues 655 to 677 (VDSLLKSFDQTQTWYIFALRPND). The segment at 798–817 (DPFSPHRYQPTSFDSQDHVY) is disordered. An N-linked (GlcNAc...) asparagine glycan is attached at N842. The next 2 membrane-spanning stretches (helical) occupy residues 912-932 (WVWL…SKIA) and 951-971 (MIIW…GPVI). N1062, N1078, and N1146 each carry an N-linked (GlcNAc...) asparagine glycan. The helical transmembrane segment at 1220–1240 (ILLALSCVMVAVIGFKFLSAL) threads the bilayer. N-linked (GlcNAc...) asparagine glycosylation occurs at N1583. The next 3 membrane-spanning stretches (helical) occupy residues 1615–1635 (LSTI…YLIV), 1641–1661 (IPTL…MIFI), and 1668–1688 (MIAW…LLPL). The interval 1826–1847 (AHRPSLDDTSSFHQPYQPAPRP) is disordered. Positions 1875 to 1930 (AITDSQLERSIRKICANAELDKLTKKGVRKELEREYGVELTERREAINRLVEKVLT) constitute a DEK-C domain.

This sequence in the N-terminal section; belongs to the TRAFAC class CC myosin-kinesin ATPase superfamily. Myosin family. The protein in the C-terminal section; belongs to the chitin synthase family. Class V subfamily.

The protein resides in the cell membrane. The protein localises to the cell septum. It localises to the cell tip. The catalysed reaction is [(1-&gt;4)-N-acetyl-beta-D-glucosaminyl](n) + UDP-N-acetyl-alpha-D-glucosamine = [(1-&gt;4)-N-acetyl-beta-D-glucosaminyl](n+1) + UDP + H(+). Polymerizes chitin, a structural polymer of the cell wall and septum, by transferring the sugar moiety of UDP-GlcNAc to the non-reducing end of the growing chitin polymer. Produces a large proportion of the chitin that is not deacetylated to chitosan. This is Chitin synthase 5 from Cryptococcus neoformans var. grubii serotype A (strain H99 / ATCC 208821 / CBS 10515 / FGSC 9487) (Filobasidiella neoformans var. grubii).